A 750-amino-acid polypeptide reads, in one-letter code: Photosystem I P700 chlorophyll a apoprotein A1 (750 aa).

Helical transmembrane passes span 70–93 (VFSA…FHGA), 156–179 (LYCT…FHYH), 195–219 (LNHH…HVSL), 291–309 (IIHH…GHMY), 346–369 (WHAQ…HHMY), 385–411 (LSLF…IFMV), 433–455 (AIIS…LYIH), and 531–549 (FLVH…LILL). [4Fe-4S] cluster-binding residues include C573 and C582. 2 helical membrane-spanning segments follow: residues 589–610 (HVFL…HFSW) and 664–686 (LSAY…MFLF). H675 contributes to the chlorophyll a' binding site. Chlorophyll a is bound by residues M683 and Y691. Residue W692 coordinates phylloquinone. A helical membrane pass occupies residues 724–744 (AVGVTHYLLGGIATTWAFFLA).

It belongs to the PsaA/PsaB family. As to quaternary structure, the PsaA/B heterodimer binds the P700 chlorophyll special pair and subsequent electron acceptors. PSI consists of a core antenna complex that captures photons, and an electron transfer chain that converts photonic excitation into a charge separation. The eukaryotic PSI reaction center is composed of at least 11 subunits. The cofactor is P700 is a chlorophyll a/chlorophyll a' dimer, A0 is one or more chlorophyll a, A1 is one or both phylloquinones and FX is a shared 4Fe-4S iron-sulfur center..

It is found in the plastid. It localises to the chloroplast thylakoid membrane. The catalysed reaction is reduced [plastocyanin] + hnu + oxidized [2Fe-2S]-[ferredoxin] = oxidized [plastocyanin] + reduced [2Fe-2S]-[ferredoxin]. PsaA and PsaB bind P700, the primary electron donor of photosystem I (PSI), as well as the electron acceptors A0, A1 and FX. PSI is a plastocyanin-ferredoxin oxidoreductase, converting photonic excitation into a charge separation, which transfers an electron from the donor P700 chlorophyll pair to the spectroscopically characterized acceptors A0, A1, FX, FA and FB in turn. Oxidized P700 is reduced on the lumenal side of the thylakoid membrane by plastocyanin. The protein is Photosystem I P700 chlorophyll a apoprotein A1 of Phaseolus vulgaris (Kidney bean).